Reading from the N-terminus, the 98-residue chain is NADH-ubiquinone oxidoreductase chain 4L (98 aa).

3 consecutive transmembrane segments (helical) span residues 1–21 (MTTIYLNLILAFTLALSGVLI), 26–46 (LLSTLLCLEGMMLSLFILMAL), and 59–79 (APLILLVFSACEAGVGLALLV).

This sequence belongs to the complex I subunit 4L family. Core subunit of respiratory chain NADH dehydrogenase (Complex I) which is composed of 45 different subunits.

Its subcellular location is the mitochondrion inner membrane. The catalysed reaction is a ubiquinone + NADH + 5 H(+)(in) = a ubiquinol + NAD(+) + 4 H(+)(out). Its function is as follows. Core subunit of the mitochondrial membrane respiratory chain NADH dehydrogenase (Complex I) which catalyzes electron transfer from NADH through the respiratory chain, using ubiquinone as an electron acceptor. Part of the enzyme membrane arm which is embedded in the lipid bilayer and involved in proton translocation. This chain is NADH-ubiquinone oxidoreductase chain 4L (MT-ND4L), found in Rhyncholestes raphanurus (Chilean shrew opossum).